A 408-amino-acid polypeptide reads, in one-letter code: COP9 signalosome complex subunit 4 (408 aa).

A PCI domain is found at 194–374 (RIQDARRRFL…GIIYFESNTT (181 aa)).

The protein belongs to the CSN4 family. As to quaternary structure, component of the COP9 signalosome (CSN) complex.

Its subcellular location is the cytoplasm. The protein localises to the nucleus. Functionally, component of the COP9 signalosome (CSN) complex that acts as an regulator of the ubiquitin (Ubl) conjugation pathway by mediating the deneddylation of the cullin subunit of SCF-type E3 ubiquitin-protein ligase complexes. The CSN complex seems to link protein degradation to sexual development. Required for fruit body formation. The polypeptide is COP9 signalosome complex subunit 4 (csnD) (Emericella nidulans (strain FGSC A4 / ATCC 38163 / CBS 112.46 / NRRL 194 / M139) (Aspergillus nidulans)).